We begin with the raw amino-acid sequence, 301 residues long: tRNA pseudouridine synthase B (301 aa).

Aspartate 38 serves as the catalytic Nucleophile.

This sequence belongs to the pseudouridine synthase TruB family. Type 1 subfamily.

The enzyme catalyses uridine(55) in tRNA = pseudouridine(55) in tRNA. Functionally, responsible for synthesis of pseudouridine from uracil-55 in the psi GC loop of transfer RNAs. This Clostridioides difficile (strain 630) (Peptoclostridium difficile) protein is tRNA pseudouridine synthase B.